The sequence spans 564 residues: Keratin, type II cytoskeletal 6C (564 aa).

Over residues 1–11 (MASTSTTIRSH) the composition is skewed to low complexity. Residues 1–23 (MASTSTTIRSHSSSRRGFSANSA) form a disordered region. Residue Ala2 is modified to N-acetylalanine. Positions 2–162 (ASTSTTIRSH…DPAIQRVRAE (161 aa)) are head. Ser60 carries the phosphoserine modification. Residues 163–198 (EREQIKTLNNKFASFIDKVRFLEQQNKVLDTKWTLL) form a coil 1A region. The IF rod domain maps to 163–476 (EREQIKTLNN…KLLEGEECRL (314 aa)). A linker 1 region spans residues 199-217 (QEQGTKTVRQNLEPLFEQY). The tract at residues 218–309 (INNLRRQLDS…ALYDAELSQM (92 aa)) is coil 1B. The linker 12 stretch occupies residues 310–333 (QTHISDTSVVLSMDNNRNLDLDSI). Residues 334 to 472 (IAEVKAQYEE…ATYRKLLEGE (139 aa)) form a coil 2 region. The segment at 473-564 (ECRLNGEGVG…SSSSRKSYKH (92 aa)) is tail.

Belongs to the intermediate filament family. As to quaternary structure, heterodimer of a type I and a type II keratin. KRT6 isomers associate with KRT16 and/or KRT17. In terms of tissue distribution, constitutively expressed in distinct types of epithelia such as those in oral mucosa, esophagus, papillae of tongue and hair follicle outer root sheath.

This Homo sapiens (Human) protein is Keratin, type II cytoskeletal 6C (KRT6C).